The chain runs to 299 residues: Oxygen-dependent coproporphyrinogen-III oxidase (299 aa).

S92 contributes to the substrate binding site. Mn(2+) is bound by residues H96 and H106. The active-site Proton donor is H106. Residue 108-110 participates in substrate binding; that stretch reads NVR. 2 residues coordinate Mn(2+): H145 and H175. The segment at 240 to 275 is important for dimerization; the sequence is YVEFNLVWDRGTLFGLQTGGRTESILMSMPPLVRWE. Residue 258–260 participates in substrate binding; it reads GGR.

The protein belongs to the aerobic coproporphyrinogen-III oxidase family. Homodimer. Requires Mn(2+) as cofactor.

Its subcellular location is the cytoplasm. The catalysed reaction is coproporphyrinogen III + O2 + 2 H(+) = protoporphyrinogen IX + 2 CO2 + 2 H2O. Its pathway is porphyrin-containing compound metabolism; protoporphyrin-IX biosynthesis; protoporphyrinogen-IX from coproporphyrinogen-III (O2 route): step 1/1. Involved in the heme biosynthesis. Catalyzes the aerobic oxidative decarboxylation of propionate groups of rings A and B of coproporphyrinogen-III to yield the vinyl groups in protoporphyrinogen-IX. This chain is Oxygen-dependent coproporphyrinogen-III oxidase, found in Escherichia coli O157:H7.